Here is a 120-residue protein sequence, read N- to C-terminus: Large ribosomal subunit protein uL18 (120 aa).

The protein belongs to the universal ribosomal protein uL18 family. As to quaternary structure, part of the 50S ribosomal subunit; part of the 5S rRNA/L5/L18/L25 subcomplex. Contacts the 5S and 23S rRNAs.

This is one of the proteins that bind and probably mediate the attachment of the 5S RNA into the large ribosomal subunit, where it forms part of the central protuberance. This chain is Large ribosomal subunit protein uL18, found in Afipia carboxidovorans (strain ATCC 49405 / DSM 1227 / KCTC 32145 / OM5) (Oligotropha carboxidovorans).